The primary structure comprises 293 residues: Bifunctional protein FolD (293 aa).

NADP(+) is bound by residues 166 to 168 (GAS) and Ile232.

This sequence belongs to the tetrahydrofolate dehydrogenase/cyclohydrolase family. Homodimer.

It catalyses the reaction (6R)-5,10-methylene-5,6,7,8-tetrahydrofolate + NADP(+) = (6R)-5,10-methenyltetrahydrofolate + NADPH. The enzyme catalyses (6R)-5,10-methenyltetrahydrofolate + H2O = (6R)-10-formyltetrahydrofolate + H(+). It participates in one-carbon metabolism; tetrahydrofolate interconversion. Catalyzes the oxidation of 5,10-methylenetetrahydrofolate to 5,10-methenyltetrahydrofolate and then the hydrolysis of 5,10-methenyltetrahydrofolate to 10-formyltetrahydrofolate. The sequence is that of Bifunctional protein FolD from Yersinia enterocolitica serotype O:8 / biotype 1B (strain NCTC 13174 / 8081).